Consider the following 252-residue polypeptide: RNA-binding protein 7 (252 aa).

The RRM domain occupies 9–86 (RTLFVGNLDP…RQLNIKFKTG (78 aa)). Composition is skewed to polar residues over residues 88–107 (SHIN…SPAN) and 119–137 (QMGS…PFSS). 2 disordered regions span residues 88 to 137 (SHIN…PFSS) and 171 to 252 (QLRG…WKHF). 2 stretches are compositionally biased toward basic and acidic residues: residues 211-230 (ERNR…DRSG) and 237-252 (PPDR…WKHF).

Component of the nuclear exosome targeting (NEXT) complex composed of MTREX, ZCCHC8, and RBM7 that directs a subset of non-coding short-lived RNAs for exosomal degradation.

It localises to the nucleus. Its subcellular location is the nucleoplasm. RNA-binding subunit of the trimeric nuclear exosome targeting (NEXT) complex, a complex that functions as an RNA exosome cofactor that directs a subset of non-coding short-lived RNAs for exosomal degradation. NEXT is involved in surveillance and turnover of aberrant transcripts and non-coding RNAs. Binds preferentially polyuridine sequences and associates with newly synthesized RNAs, including pre-mRNAs and short-lived exosome substrates such as promoter upstream transcripts (PROMPTs), enhancer RNAs (eRNAs), and 3'-extended products from small nuclear RNAs (snRNAs). This chain is RNA-binding protein 7, found in Danio rerio (Zebrafish).